The chain runs to 122 residues: Large ribosomal subunit protein uL14 (122 aa).

The protein belongs to the universal ribosomal protein uL14 family. As to quaternary structure, part of the 50S ribosomal subunit. Forms a cluster with proteins L3 and L19. In the 70S ribosome, L14 and L19 interact and together make contacts with the 16S rRNA in bridges B5 and B8.

Its function is as follows. Binds to 23S rRNA. Forms part of two intersubunit bridges in the 70S ribosome. The chain is Large ribosomal subunit protein uL14 from Paracidovorax citrulli (strain AAC00-1) (Acidovorax citrulli).